A 221-amino-acid chain; its full sequence is ATP phosphoribosyltransferase (221 aa).

This sequence belongs to the ATP phosphoribosyltransferase family. Short subfamily. Heteromultimer composed of HisG and HisZ subunits.

The protein localises to the cytoplasm. It carries out the reaction 1-(5-phospho-beta-D-ribosyl)-ATP + diphosphate = 5-phospho-alpha-D-ribose 1-diphosphate + ATP. Its pathway is amino-acid biosynthesis; L-histidine biosynthesis; L-histidine from 5-phospho-alpha-D-ribose 1-diphosphate: step 1/9. In terms of biological role, catalyzes the condensation of ATP and 5-phosphoribose 1-diphosphate to form N'-(5'-phosphoribosyl)-ATP (PR-ATP). Has a crucial role in the pathway because the rate of histidine biosynthesis seems to be controlled primarily by regulation of HisG enzymatic activity. The polypeptide is ATP phosphoribosyltransferase (Anaeromyxobacter dehalogenans (strain 2CP-1 / ATCC BAA-258)).